The following is a 139-amino-acid chain: Acidic phospholipase A2 Tgc-E6 (139 aa).

The N-terminal stretch at 1 to 16 is a signal peptide; that stretch reads MRTLWIMAVLLLGVEG. Cystine bridges form between Cys42/Cys132, Cys44/Cys60, Cys59/Cys111, Cys65/Cys139, Cys66/Cys104, Cys73/Cys97, and Cys91/Cys102. Residues Tyr43, Gly45, and Gly47 each coordinate Ca(2+). His63 is an active-site residue. A Ca(2+)-binding site is contributed by Asp64. Residue Asp105 is part of the active site.

It belongs to the phospholipase A2 family. Group II subfamily. D49 sub-subfamily. In terms of assembly, monomer. Ca(2+) serves as cofactor. Expressed by the venom gland.

Its subcellular location is the secreted. It catalyses the reaction a 1,2-diacyl-sn-glycero-3-phosphocholine + H2O = a 1-acyl-sn-glycero-3-phosphocholine + a fatty acid + H(+). In terms of biological role, snake venom phospholipase A2 (PLA2) that inhibits the ADP-(IC(50)=272 nM) and collagen-induced (IC(50)=518 nM) human platelet aggregation in platelet rich plasma. Exhibits very high hydrolytic activities toward the synthetic lecithin, and prefers the anionic micelles (dPPC with deoxycholate) to the zwitterionic micelles (dPPC with Triton X-100). PLA2 catalyzes the calcium-dependent hydrolysis of the 2-acyl groups in 3-sn-phosphoglycerides. The protein is Acidic phospholipase A2 Tgc-E6 of Trimeresurus gracilis (Kikuchi habu).